The primary structure comprises 473 residues: Cysteine--tRNA ligase (473 aa).

C28 contacts Zn(2+). The 'HIGH' region signature appears at 30-40 (PTVYNYIHIGN). 3 residues coordinate Zn(2+): C210, H235, and E239. The short motif at 267–271 (KMSKS) is the 'KMSKS' region element. K270 is an ATP binding site.

It belongs to the class-I aminoacyl-tRNA synthetase family. In terms of assembly, monomer. Requires Zn(2+) as cofactor.

The protein localises to the cytoplasm. It catalyses the reaction tRNA(Cys) + L-cysteine + ATP = L-cysteinyl-tRNA(Cys) + AMP + diphosphate. In Fusobacterium nucleatum subsp. nucleatum (strain ATCC 25586 / DSM 15643 / BCRC 10681 / CIP 101130 / JCM 8532 / KCTC 2640 / LMG 13131 / VPI 4355), this protein is Cysteine--tRNA ligase.